Consider the following 1152-residue polypeptide: Syntaxin-binding protein 5 (1152 aa).

A disordered region spans residues 14-35; it reads TAGSSSASQQQQQQQHPPGNRE. A compositionally biased stretch (low complexity) spans 17–28; the sequence is SSSASQQQQQQQ. WD repeat units lie at residues 62 to 95, 102 to 141, 146 to 182, 201 to 235, 241 to 273, 295 to 337, 345 to 379, 401 to 478, 506 to 620, and 634 to 696; these read SALAFDPVQKILAVGTQTGALRLFGRPGVECYCQ, VIQLQFLINEGALVSALADDTLHLWNLRQKRPAVLHSLKF, VTFCHLPFQSKWLYVGTERGNIHIVNVESFTLSGYVI, HISDNPMDEGKLLIGFESGTVVLWDLKSKKADYRY, IHSVAWHHEGKQFICSHSDGTLTIWNVRSPAKP, PILK…KSTA, IVDFLTLCETPYPNDFQEPYAVVVLLEKDLVLIDL, TCCE…YKLK, QIIS…ELVI, and TSLA…SGAG. Disordered stretches follow at residues 555-596 and 675-731; these read VDTP…GLRD and SNDP…QKVN. The residue at position 693 (Ser-693) is a Phosphoserine. The span at 713–722 shows a compositional bias: low complexity; that stretch reads SPTSGSSSPH. A phosphoserine mark is found at Ser-724 and Ser-760. At Thr-763 the chain carries Phosphothreonine. Position 783 is a phosphoserine (Ser-783). Residue Thr-785 is modified to Phosphothreonine. Residue Ser-786 is modified to Phosphoserine. WD repeat units follow at residues 795-852, 861-935, 940-984, and 998-1021; these read ISAL…SGTI, RMAF…QSCA, ITET…LDVY, and CFANNGQALYLVSPTEIQRLTYSQ. Positions 883–893 are enriched in basic and acidic residues; that stretch reads NVAEEKDEKEK. Positions 883–907 are disordered; the sequence is NVAEEKDEKEKLKKRRPVSVSPSSS. Residues Ser-901 and Ser-903 each carry the phosphoserine modification. Thr-1040 carries the post-translational modification Phosphothreonine. Residues Ser-1059 and Ser-1132 each carry the phosphoserine modification. The v-SNARE coiled-coil homology domain maps to 1087–1147; it reads GIEGVKGAAS…HEMMLKYKDK (61 aa).

It belongs to the WD repeat L(2)GL family. As to quaternary structure, part of a complex that contains STX1, STXBP5, SNAP25 and SYT1. Interacts with STX1A and STX4A via its v-SNARE homology domain. Part of a complex that contains STXBP5, STX4A and SNAP23. In terms of tissue distribution, detected in heart, spleen, lung, skeletal muscle, liver and kidney (at protein level). Detected in brain, particularly in the olfactory bulb and in hippocampus. Detected in the tenia tecta and in the piriform layer of the brain cortex.

The protein localises to the cytoplasm. It localises to the cell membrane. The protein resides in the membrane. In terms of biological role, plays a regulatory role in calcium-dependent exocytosis and neurotransmitter release. Inhibits membrane fusion between transport vesicles and the plasma membrane. May modulate the assembly of trans-SNARE complexes between transport vesicles and the plasma membrane. Competes with STXBP1 for STX1 binding. Inhibits translocation of GLUT4 from intracellular vesicles to the plasma membrane. This is Syntaxin-binding protein 5 (Stxbp5) from Mus musculus (Mouse).